A 143-amino-acid polypeptide reads, in one-letter code: Large ribosomal subunit protein uL15 (143 aa).

Residues 1–52 are disordered; it reads MELNTIQPADGAKHYKRRVGRGIGSGLGKTAGRGHKGQKSRSGGFHKVGFEG. Residues 21-31 are compositionally biased toward gly residues; that stretch reads RGIGSGLGKTA.

It belongs to the universal ribosomal protein uL15 family. As to quaternary structure, part of the 50S ribosomal subunit.

In terms of biological role, binds to the 23S rRNA. This chain is Large ribosomal subunit protein uL15, found in Herminiimonas arsenicoxydans.